The primary structure comprises 503 residues: Probable cytosol aminopeptidase (503 aa).

Mn(2+)-binding residues include Lys-270 and Asp-275. The active site involves Lys-282. 3 residues coordinate Mn(2+): Asp-293, Asp-352, and Glu-354. Arg-356 is a catalytic residue.

Belongs to the peptidase M17 family. The cofactor is Mn(2+).

The protein resides in the cytoplasm. It catalyses the reaction Release of an N-terminal amino acid, Xaa-|-Yaa-, in which Xaa is preferably Leu, but may be other amino acids including Pro although not Arg or Lys, and Yaa may be Pro. Amino acid amides and methyl esters are also readily hydrolyzed, but rates on arylamides are exceedingly low.. The enzyme catalyses Release of an N-terminal amino acid, preferentially leucine, but not glutamic or aspartic acids.. In terms of biological role, presumably involved in the processing and regular turnover of intracellular proteins. Catalyzes the removal of unsubstituted N-terminal amino acids from various peptides. The polypeptide is Probable cytosol aminopeptidase (Klebsiella pneumoniae (strain 342)).